Consider the following 228-residue polypeptide: MGFTDFVSDAGLSLANNYLATRSYIVGHAPSQADVVTYKAFTASPDAEKYPHVARWYKHIASYESEFPTLPGDASKAFTAYGPEGSEASANPKDKPAEEEEEEDLFASDSEDEDPAVVAERNKNLEEYKKKKAAKGPKPAAKSLVTLEVKPWDDETNLEELEANVRAIEMDGLVWGASKFVAVGFGIKKLQINLVVEDEKVSTDELQAQIEEDEDHVQSTDVAAMQKL.

The interval 74–116 (ASKAFTAYGPEGSEASANPKDKPAEEEEEEDLFASDSEDEDPA) is disordered. Residues 84–93 (EGSEASANPK) are igE-binding. Acidic residues predominate over residues 97-115 (AEEEEEEDLFASDSEDEDP).

This sequence belongs to the EF-1-beta/EF-1-delta family. As to quaternary structure, EF-1 is composed of 4 subunits: alpha, beta, delta, and gamma.

Its function is as follows. EF-1-beta and EF-1-delta stimulate the exchange of GDP bound to EF-1-alpha to GTP. This Penicillium citrinum protein is Elongation factor 1-beta.